The primary structure comprises 183 residues: CyanoP (183 aa).

A signal peptide spans 1 to 19 (MLQRFFATALAIFVVLLGG). C20 carries the N-palmitoyl cysteine lipid modification. C20 is lipidated: S-diacylglycerol cysteine. The Zn(2+) site is built by D31, D34, D54, H58, T63, E87, D91, H142, E163, and E164.

The protein belongs to the PsbP family. CyanoP subfamily. Monomer. Present in very small amounts in PSII. The cofactor is Zn(2+).

It is found in the cellular thylakoid membrane. Plays a role in the early stages of photosystem II (PSII) assembly; binds to D2 (psbD) and may facilitate its incorporation into PSII. Present in less than 1% of PSII preparations. The protein is CyanoP of Thermosynechococcus vestitus (strain NIES-2133 / IAM M-273 / BP-1).